The sequence spans 280 residues: MVAITTTLVKQLRDRTNAGLMKCKKALIEANGDIELAIDNLRKSGQITAANKSSRITAQGIILTKINHNSQYGVIIELNCETDFVAKDKIFKNFGEDIITTALNQKISSLEEIKSLFEEKRITLVDTVGENINIRRINTLEGNLIVSYLHDTRIGVLLSANNISQNLYLGKQIAMHIAAMKPKYIQVNDIPSYIISREHKIQLNIAMQSNKPQKVIQQIVEGRMREFTRDISLLDQNFIIDPSQKVGQILEHYNIIVKNFIRFEVGEWIEQEEHYKANES.

Residues 82–85 are involved in Mg(2+) ion dislocation from EF-Tu; that stretch reads TDFV.

Belongs to the EF-Ts family.

The protein resides in the cytoplasm. Associates with the EF-Tu.GDP complex and induces the exchange of GDP to GTP. It remains bound to the aminoacyl-tRNA.EF-Tu.GTP complex up to the GTP hydrolysis stage on the ribosome. This is Elongation factor Ts from Baumannia cicadellinicola subsp. Homalodisca coagulata.